The chain runs to 221 residues: Small ribosomal subunit protein uS3 (221 aa).

Positions 39–107 (IREYIKRKLY…QVHVNIVEVK (69 aa)) constitute a KH type-2 domain.

The protein belongs to the universal ribosomal protein uS3 family. Part of the 30S ribosomal subunit. Forms a tight complex with proteins S10 and S14.

In terms of biological role, binds the lower part of the 30S subunit head. Binds mRNA in the 70S ribosome, positioning it for translation. The polypeptide is Small ribosomal subunit protein uS3 (Desulforamulus reducens (strain ATCC BAA-1160 / DSM 100696 / MI-1) (Desulfotomaculum reducens)).